The chain runs to 178 residues: Ribosome maturation factor RimM (178 aa).

One can recognise a PRC barrel domain in the interval 103–177 (SKDEYYFFEI…KIVVKVPEWL (75 aa)).

It belongs to the RimM family. Binds ribosomal protein uS19.

The protein resides in the cytoplasm. In terms of biological role, an accessory protein needed during the final step in the assembly of 30S ribosomal subunit, possibly for assembly of the head region. Essential for efficient processing of 16S rRNA. May be needed both before and after RbfA during the maturation of 16S rRNA. It has affinity for free ribosomal 30S subunits but not for 70S ribosomes. In Thermosipho africanus (strain TCF52B), this protein is Ribosome maturation factor RimM.